A 248-amino-acid chain; its full sequence is Pyridoxine 5'-phosphate synthase (248 aa).

Asn-12 contributes to the 3-amino-2-oxopropyl phosphate binding site. 14 to 15 provides a ligand contact to 1-deoxy-D-xylulose 5-phosphate; sequence DH. Residue Arg-23 participates in 3-amino-2-oxopropyl phosphate binding. His-48 functions as the Proton acceptor in the catalytic mechanism. Residues Arg-50 and His-55 each contribute to the 1-deoxy-D-xylulose 5-phosphate site. The active-site Proton acceptor is the Glu-75. Thr-105 is a 1-deoxy-D-xylulose 5-phosphate binding site. Residue His-196 is the Proton donor of the active site. 3-amino-2-oxopropyl phosphate-binding positions include Gly-197 and 218-219; that span reads GH.

The protein belongs to the PNP synthase family. Homooctamer; tetramer of dimers.

The protein resides in the cytoplasm. It carries out the reaction 3-amino-2-oxopropyl phosphate + 1-deoxy-D-xylulose 5-phosphate = pyridoxine 5'-phosphate + phosphate + 2 H2O + H(+). Its pathway is cofactor biosynthesis; pyridoxine 5'-phosphate biosynthesis; pyridoxine 5'-phosphate from D-erythrose 4-phosphate: step 5/5. In terms of biological role, catalyzes the complicated ring closure reaction between the two acyclic compounds 1-deoxy-D-xylulose-5-phosphate (DXP) and 3-amino-2-oxopropyl phosphate (1-amino-acetone-3-phosphate or AAP) to form pyridoxine 5'-phosphate (PNP) and inorganic phosphate. This Ectopseudomonas mendocina (strain ymp) (Pseudomonas mendocina) protein is Pyridoxine 5'-phosphate synthase.